A 286-amino-acid polypeptide reads, in one-letter code: Polyamine aminopropyltransferase (286 aa).

Positions 2–237 (DLWFSEVHTP…GYWLFGFASK (236 aa)) constitute a PABS domain. Q31 is a binding site for S-methyl-5'-thioadenosine. D86 lines the spermidine pocket. S-methyl-5'-thioadenosine is bound by residues E106 and 137–138 (NG). D155 acts as the Proton acceptor in catalysis.

Belongs to the spermidine/spermine synthase family. In terms of assembly, homodimer or homotetramer.

The protein localises to the cytoplasm. It catalyses the reaction S-adenosyl 3-(methylsulfanyl)propylamine + putrescine = S-methyl-5'-thioadenosine + spermidine + H(+). Its pathway is amine and polyamine biosynthesis; spermidine biosynthesis; spermidine from putrescine: step 1/1. Catalyzes the irreversible transfer of a propylamine group from the amino donor S-adenosylmethioninamine (decarboxy-AdoMet) to putrescine (1,4-diaminobutane) to yield spermidine. The chain is Polyamine aminopropyltransferase from Streptococcus pneumoniae serotype 4 (strain ATCC BAA-334 / TIGR4).